Here is an 871-residue protein sequence, read N- to C-terminus: Transient receptor potential cation channel subfamily V member 4 (871 aa).

Disordered stretches follow at residues 1–68 (MADP…PNLR) and 110–143 (YGTY…PQPP). Over 1 to 469 (MADPGDGPRA…RDKWRKFGAV (469 aa)) the chain is Cytoplasmic. At Tyr110 the chain carries Phosphotyrosine; by SRC-type Tyr-kinases. The span at 116–129 (HPSDNKRWRRKVVE) shows a compositional bias: basic and acidic residues. Residues Lys192, Lys197, Asn201, 236 to 239 (YRGQ), and Arg248 each bind ATP. ANK repeat units lie at residues 237-266 (RGQT…DVHA) and 284-313 (FGEL…KKAD). 249-251 (RCK) is an a 1,2-diacyl-sn-glycero-3-phospho-(1D-myo-inositol-4,5-bisphosphate) binding site. At Tyr253 the chain carries Phosphotyrosine; by LYN. Residues 296–299 (NQPH) and Lys344 each bind a 1,2-diacyl-sn-glycero-3-phospho-(1D-myo-inositol-4,5-bisphosphate). The ANK 3 repeat unit spans residues 369–398 (DGLSPLMMAAKTGKIGVFQHIIRREVTDED). A helical membrane pass occupies residues 470-490 (SFYINVVSYLCAMVIFTLTAY). Residues 491 to 507 (YQPLEGTPPYPYRTTVD) are Extracellular-facing. Residues 508-534 (YLRLAGEVITLFTGVLFFFTSIKDLFT) traverse the membrane as a helical segment. Residues 535–547 (KKCPGVNSLFVDG) are Cytoplasmic-facing. The helical transmembrane segment at 548-568 (SFQLLYFIYSVLVVVSAALYL) threads the bilayer. Over 569-572 (AGIE) the chain is Extracellular. Residues 573-593 (AYLAVMVFALVLGWMNALYFT) form a helical membrane-spanning segment. Residues 594 to 608 (RGLKLTGTYSIMIQK) are Cytoplasmic-facing. A helical transmembrane segment spans residues 609-636 (ILFKDLFRFLLVYLLFMIGYASALVTLL). At 637 to 665 (NPCTNMKVCDEDQSNCTVPTYPACRDSET) the chain is on the extracellular side. An N-linked (GlcNAc...) asparagine glycan is attached at Asn651. The segment at residues 666-685 (FSAFLLDLFKLTIGMGDLEM) is an intramembrane region (pore-forming). The Selectivity filter motif lies at 679–682 (GMGD). A Ca(2+)-binding site is contributed by Asp682. The Extracellular segment spans residues 686–693 (LSSAKYPV). A helical membrane pass occupies residues 694-722 (VFILLLVTYIILTFVLLLNMLIALMGETV). At 723–871 (GQVSKESKHI…PKWRTDDAPL (149 aa)) the chain is on the cytoplasmic side. Phosphotyrosine; by SRC-type Tyr-kinases is present on Tyr805. Positions 812–831 (HTVGRLRRDRWSSVVPRVVE) are interaction with calmodulin and ITPR3. Ser824 is modified (phosphoserine; by PKC and PKA). The segment at 850–871 (NPNCDGHQQGYAPKWRTDDAPL) is disordered.

This sequence belongs to the transient receptor (TC 1.A.4) family. TrpV subfamily. TRPV4 sub-subfamily. Homotetramer. Interacts with calmodulin. Interacts with CTNNB1. The TRPV4 and CTNNB1 complex can interact with CDH1. Part of a complex containing MLC1, AQP4, HEPACAM and ATP1B1. Interacts with MAP7 and Src family Tyr protein kinases LYN, SRC, FYN, HCK, LCK and YES. Interacts with PACSIN1, PACSIN2 and PACSIN3 (via SH3 domain). Interacts with ITPR3. Interacts with AQP5; the interaction is probably indirect and regulates TRPV4 activation by hypotonicity. Interacts with ANO1. Interacts (via C-terminus) with PKD2 (via C-terminus). Interacts with DDX3X; this interaction is decreased when the channel is activated. N-glycosylated. In terms of tissue distribution, detected in liver, kidney, heart, brain cortex, cerebellum and brainstem (at protein level). Expressed in salivary glands (at protein level). Expressed in heart, lung, spleen, liver, kidney, brain, skeletal muscle and testis. In the central nervous system, expressed in the lamina terminalis (arched vascular organ and neurons of the subfornical organ), median preoptic area, ventral hippocampal commissure, and ependymal cells of the choroid plexus. In the cochlea, expressed in both inner and outer hair cells, and in marginal cells of the cochlear stria vascularis. Expressed in large neurons of the trigeminal ganglion. In the kidney cortex, strongly expressed by epithelial cells of tubules and much weaker in glomeruli.

It is found in the cell membrane. It localises to the apical cell membrane. The protein localises to the cell junction. Its subcellular location is the adherens junction. The protein resides in the cell projection. It is found in the cilium. The enzyme catalyses Ca(2+)(in) = Ca(2+)(out). Non-selective calcium permeant cation channel involved in osmotic sensitivity and mechanosensitivity. Activation by exposure to hypotonicity within the physiological range exhibits an outward rectification. Also activated by heat, low pH, citrate and phorbol esters. Increase of intracellular Ca(2+) potentiates currents. Channel activity seems to be regulated by a calmodulin-dependent mechanism with a negative feedback mechanism. Acts as a regulator of intracellular Ca(2+) in synoviocytes. Plays an obligatory role as a molecular component in the nonselective cation channel activation induced by 4-alpha-phorbol 12,13-didecanoate and hypotonic stimulation in synoviocytes and also regulates production of IL-8. Together with PKD2, forms mechano- and thermosensitive channels in cilium. Promotes cell-cell junction formation in skin keratinocytes and plays an important role in the formation and/or maintenance of functional intercellular barriers. Negatively regulates expression of PPARGC1A, UCP1, oxidative metabolism and respiration in adipocytes. Regulates expression of chemokines and cytokines related to pro-inflammatory pathway in adipocytes. Together with AQP5, controls regulatory volume decrease in salivary epithelial cells. Required for normal development and maintenance of bone and cartilage. In its inactive state, may sequester DDX3X at the plasma membrane. When activated, the interaction between both proteins is affected and DDX3X relocalizes to the nucleus. In neurons of the central nervous system, could play a role in triggering voluntary water intake in response to increased sodium concentration in body fluid. The polypeptide is Transient receptor potential cation channel subfamily V member 4 (Trpv4) (Mus musculus (Mouse)).